A 156-amino-acid chain; its full sequence is Cyclic pyranopterin monophosphate synthase (156 aa).

Substrate is bound by residues 75–77 (LCH) and 111–112 (ME). The active site involves Asp-126.

Belongs to the MoaC family. In terms of assembly, homohexamer; trimer of dimers.

The catalysed reaction is (8S)-3',8-cyclo-7,8-dihydroguanosine 5'-triphosphate = cyclic pyranopterin phosphate + diphosphate. The protein operates within cofactor biosynthesis; molybdopterin biosynthesis. In terms of biological role, catalyzes the conversion of (8S)-3',8-cyclo-7,8-dihydroguanosine 5'-triphosphate to cyclic pyranopterin monophosphate (cPMP). In Corynebacterium glutamicum (strain ATCC 13032 / DSM 20300 / JCM 1318 / BCRC 11384 / CCUG 27702 / LMG 3730 / NBRC 12168 / NCIMB 10025 / NRRL B-2784 / 534), this protein is Cyclic pyranopterin monophosphate synthase.